A 412-amino-acid chain; its full sequence is Serine hydroxymethyltransferase (412 aa).

Residues Leu-120 and 124 to 126 (GHL) contribute to the (6S)-5,6,7,8-tetrahydrofolate site. Residue Lys-229 is modified to N6-(pyridoxal phosphate)lysine. 352-354 (SPF) is a binding site for (6S)-5,6,7,8-tetrahydrofolate.

This sequence belongs to the SHMT family. In terms of assembly, homodimer. Pyridoxal 5'-phosphate is required as a cofactor.

Its subcellular location is the cytoplasm. It carries out the reaction (6R)-5,10-methylene-5,6,7,8-tetrahydrofolate + glycine + H2O = (6S)-5,6,7,8-tetrahydrofolate + L-serine. The protein operates within one-carbon metabolism; tetrahydrofolate interconversion. It participates in amino-acid biosynthesis; glycine biosynthesis; glycine from L-serine: step 1/1. Catalyzes the reversible interconversion of serine and glycine with tetrahydrofolate (THF) serving as the one-carbon carrier. This reaction serves as the major source of one-carbon groups required for the biosynthesis of purines, thymidylate, methionine, and other important biomolecules. Also exhibits THF-independent aldolase activity toward beta-hydroxyamino acids, producing glycine and aldehydes, via a retro-aldol mechanism. The chain is Serine hydroxymethyltransferase from Ruminiclostridium cellulolyticum (strain ATCC 35319 / DSM 5812 / JCM 6584 / H10) (Clostridium cellulolyticum).